Here is a 573-residue protein sequence, read N- to C-terminus: Probable D-xylulose kinase A (573 aa).

Residues H97, R168, D284, and N285 each coordinate substrate. ATP is bound by residues W366, 471–472 (GG), and N475.

Belongs to the FGGY kinase family.

It is found in the cytoplasm. It catalyses the reaction D-xylulose + ATP = D-xylulose 5-phosphate + ADP + H(+). In terms of biological role, highly specific D-xylulose kinase which participates in the catabolism of xylose. Xylose is a major component of hemicelluloses such as xylan. Most fungi utilize D-xylose via three enzymatic reactions, xylose reductase (XR), xylitol dehydrogenase (XDH), and xylulokinase, to form xylulose 5-phosphate, which enters pentose phosphate pathway. This is Probable D-xylulose kinase A (xkiA) from Aspergillus clavatus (strain ATCC 1007 / CBS 513.65 / DSM 816 / NCTC 3887 / NRRL 1 / QM 1276 / 107).